Reading from the N-terminus, the 197-residue chain is Probable nicotinate-nucleotide adenylyltransferase (197 aa).

Belongs to the NadD family.

The enzyme catalyses nicotinate beta-D-ribonucleotide + ATP + H(+) = deamido-NAD(+) + diphosphate. It functions in the pathway cofactor biosynthesis; NAD(+) biosynthesis; deamido-NAD(+) from nicotinate D-ribonucleotide: step 1/1. Catalyzes the reversible adenylation of nicotinate mononucleotide (NaMN) to nicotinic acid adenine dinucleotide (NaAD). This is Probable nicotinate-nucleotide adenylyltransferase from Leptospira borgpetersenii serovar Hardjo-bovis (strain JB197).